The sequence spans 206 residues: MIDFDGYRPNVGIVICNKAGQVLWAKRFGQNSWQFPQGGINEGENIETAMYRELYEEVGLTKKDVRLLWASKYWLKYKLPKRLVRSDGSQLVCIGQKQRWFLLQLLSDENLIDLKTTKSPEFDGWRWVSFWYPVRQVVSFKRDVYRKVMKEFAGVLLNESKKPETVEKPRVERTEKRDFQKRDNQKREFRKSARMWNNSHQKGKAQ.

In terms of domain architecture, Nudix hydrolase spans glycine 6–lysine 150. The Nudix box signature appears at glycine 38 to glycine 59. Residues lysine 162 to lysine 191 show a composition bias toward basic and acidic residues. The tract at residues lysine 162–glutamine 206 is disordered.

It belongs to the Nudix hydrolase family. RppH subfamily. A divalent metal cation serves as cofactor.

Accelerates the degradation of transcripts by removing pyrophosphate from the 5'-end of triphosphorylated RNA, leading to a more labile monophosphorylated state that can stimulate subsequent ribonuclease cleavage. This chain is RNA pyrophosphohydrolase, found in Actinobacillus pleuropneumoniae serotype 5b (strain L20).